We begin with the raw amino-acid sequence, 446 residues long: tRNA-2-methylthio-N(6)-dimethylallyladenosine synthase (446 aa).

An MTTase N-terminal domain is found at 2 to 122 (KKAYVKSYGC…LPDLLRQSRE (121 aa)). The [4Fe-4S] cluster site is built by cysteine 11, cysteine 47, cysteine 85, cysteine 157, cysteine 161, and cysteine 164. A Radical SAM core domain is found at 143-375 (RNRGVTGFLT…QDLLDRQRHA (233 aa)). The TRAM domain maps to 378 to 440 (AASVGTLTEI…SNSLFGEALE (63 aa)).

It belongs to the methylthiotransferase family. MiaB subfamily. In terms of assembly, monomer. It depends on [4Fe-4S] cluster as a cofactor.

It localises to the cytoplasm. The catalysed reaction is N(6)-dimethylallyladenosine(37) in tRNA + (sulfur carrier)-SH + AH2 + 2 S-adenosyl-L-methionine = 2-methylsulfanyl-N(6)-dimethylallyladenosine(37) in tRNA + (sulfur carrier)-H + 5'-deoxyadenosine + L-methionine + A + S-adenosyl-L-homocysteine + 2 H(+). Catalyzes the methylthiolation of N6-(dimethylallyl)adenosine (i(6)A), leading to the formation of 2-methylthio-N6-(dimethylallyl)adenosine (ms(2)i(6)A) at position 37 in tRNAs that read codons beginning with uridine. This Methylorubrum extorquens (strain CM4 / NCIMB 13688) (Methylobacterium extorquens) protein is tRNA-2-methylthio-N(6)-dimethylallyladenosine synthase.